Here is a 179-residue protein sequence, read N- to C-terminus: Large ribosomal subunit protein uL5c (179 aa).

It belongs to the universal ribosomal protein uL5 family. As to quaternary structure, part of the 50S ribosomal subunit; contacts the 5S rRNA.

Its subcellular location is the plastid. It is found in the chloroplast. Functionally, binds 5S rRNA, forms part of the central protuberance of the 50S subunit. The protein is Large ribosomal subunit protein uL5c (rpl5) of Gracilaria tenuistipitata var. liui (Red alga).